A 324-amino-acid chain; its full sequence is Pancreas transcription factor 1 subunit alpha (324 aa).

Residues 160–212 enclose the bHLH domain; the sequence is QLRQAANVRERRRMQSINDAFEGLRSHIPTLPYEKRLSKVDTLRLAIGYINFL. Residues 302 to 324 form a disordered region; sequence DPRKLNSKSFDNIENEPPFEFVS.

Component of the pancreas transcription factor 1 complex (PTF1) which is composed of TCF3/p75, TCF12/p64 and PTF1A/p48. TCF3 is responsible for the nuclear import of the p48/p64 complex. Interacts with TCF3 and RBPSUH/RBP-Jkappa. In terms of tissue distribution, expressed in precursors of pancreatic islets, acini and ducts.

The protein localises to the nucleus. It is found in the cytoplasm. Transcription factor implicated in the cell fate determination in various organs. Binds to the E-box consensus sequence 5'-CANNTG-3'. Plays a role in early and late pancreas development and differentiation. Important for determining whether cells allocated to the pancreatic buds continue towards pancreatic organogenesis or revert back to duodenal fates. May be involved in the maintenance of exocrine pancreas-specific gene expression including ELA1 and amylase. Required for the formation of pancreatic acinar and ductal cells. Plays an important role in cerebellar development. Directly regulated by FOXN4 and RORC during retinal development, FOXN4-PTF1A pathway plays a central role in directing the differentiation of retinal progenitors towards horizontal and amacrine fates. The sequence is that of Pancreas transcription factor 1 subunit alpha (Ptf1a) from Mus musculus (Mouse).